The primary structure comprises 371 residues: Aminomethyltransferase (371 aa).

It belongs to the GcvT family. As to quaternary structure, the glycine cleavage system is composed of four proteins: P, T, L and H.

The enzyme catalyses N(6)-[(R)-S(8)-aminomethyldihydrolipoyl]-L-lysyl-[protein] + (6S)-5,6,7,8-tetrahydrofolate = N(6)-[(R)-dihydrolipoyl]-L-lysyl-[protein] + (6R)-5,10-methylene-5,6,7,8-tetrahydrofolate + NH4(+). In terms of biological role, the glycine cleavage system catalyzes the degradation of glycine. This chain is Aminomethyltransferase, found in Pectobacterium carotovorum subsp. carotovorum (strain PC1).